Here is a 401-residue protein sequence, read N- to C-terminus: Probable acid ceramidase (401 aa).

A signal peptide spans 1-22 (MKPVAISLSLLLLVTLLPGSEQ). N-linked (GlcNAc...) asparagine glycosylation is found at N101, N303, and N371.

This sequence belongs to the acid ceramidase family.

It carries out the reaction an N-acyl-sphingoid base + H2O = a sphingoid base + a fatty acid. It catalyses the reaction an N-acylsphing-4-enine + H2O = sphing-4-enine + a fatty acid. The catalysed reaction is an N-acyl-15-methylhexadecasphing-4-enine + H2O = 15-methylhexadecasphing-4-enine + a fatty acid. Its function is as follows. Catalyzes the hydrolysis of ceramides into sphingoid base and free fatty acid. C.elegans contain specific sphingoid bases, which are unique or different in structure compared to the sphingoid bases found in other animals. Two examples of these distinctive compounds are: 15-methylhexadecasphinganine and 15-methylhexadecasphing-4-enine. This is Probable acid ceramidase from Caenorhabditis elegans.